Reading from the N-terminus, the 257-residue chain is E3 ubiquitin-protein ligase RNF170 (257 aa).

Residues 1 to 24 lie on the Lumenal side of the membrane; the sequence is MADNQEGRPYFPLDEGSIIEGVSD. The helical transmembrane segment at 25-45 threads the bilayer; it reads QVIVVVLLSFVAVGSLLYLLL. Topologically, residues 46-200 are cytoplasmic; it reads RNDEQNIHPE…GGLFWMFRIR (155 aa). The RING-type zinc finger occupies 87–130; sequence CPVCLQQATFPVETNCGHLFCGSCIIAYWRYGSWLGAINCPICR. Residues 201–221 traverse the membrane as a helical segment; sequence IVLCLLGALFYLVSPLDIIPE. Position 222 (Ala222) is a topological domain, lumenal. The chain crosses the membrane as a helical span at residues 223 to 243; that stretch reads VFGLLGFLDDFFVLFLLLIYI. Over 244–257 the chain is Cytoplasmic; sequence SIMYREVVTQRLYR.

It localises to the endoplasmic reticulum membrane. It catalyses the reaction S-ubiquitinyl-[E2 ubiquitin-conjugating enzyme]-L-cysteine + [acceptor protein]-L-lysine = [E2 ubiquitin-conjugating enzyme]-L-cysteine + N(6)-ubiquitinyl-[acceptor protein]-L-lysine.. Its pathway is protein modification; protein ubiquitination. E3 ubiquitin-protein ligase that plays an essential role in stimulus-induced inositol 1,4,5-trisphosphate receptor (ITPR) ubiquitination and degradation via the endoplasmic reticulum-associated degradation (ERAD) pathway. Also involved in ITPR turnover in resting cells. The polypeptide is E3 ubiquitin-protein ligase RNF170 (rnf170) (Xenopus tropicalis (Western clawed frog)).